We begin with the raw amino-acid sequence, 273 residues long: Undecaprenyl-diphosphatase (273 aa).

7 helical membrane passes run Gly13 to Asn35, Val45 to Tyr62, Phe82 to Lys102, Leu108 to Val128, Thr186 to Leu206, Leu219 to Leu239, and Phe250 to Ile270.

This sequence belongs to the UppP family.

The protein resides in the cell inner membrane. The enzyme catalyses di-trans,octa-cis-undecaprenyl diphosphate + H2O = di-trans,octa-cis-undecaprenyl phosphate + phosphate + H(+). In terms of biological role, catalyzes the dephosphorylation of undecaprenyl diphosphate (UPP). Confers resistance to bacitracin. This chain is Undecaprenyl-diphosphatase, found in Neisseria gonorrhoeae (strain ATCC 700825 / FA 1090).